Consider the following 317-residue polypeptide: Melanocyte-stimulating hormone receptor (317 aa).

The Extracellular segment spans residues 1–37 (MPVLGSQRRLLGSLNCTPPATLPLTLAPNRTGPQCLE). A glycan (N-linked (GlcNAc...) asparagine) is linked at Asn29. Residues 38–63 (VSIPDGLFLSLGLVSLVENVLVVAAI) traverse the membrane as a helical segment. Residues 64 to 72 (AKNRNLHSP) are Cytoplasmic-facing. A helical membrane pass occupies residues 73–93 (MYYFICCLAMSDLLVSVSNVL). Residues 94-118 (ETAVMLLLEAGVLATRAAVVQQLDN) are Extracellular-facing. Residues 119–140 (VIDVLICSSMVSSLCFLGAIAV) form a helical membrane-spanning segment. Residues 141–163 (DRYISIFYALRYHSVVTLPRAWR) lie on the Cytoplasmic side of the membrane. Residues 164–183 (IIAAIWVASILTSVLSITYY) form a helical membrane-spanning segment. Residues 184 to 191 (NHTVVLLC) are Extracellular-facing. The chain crosses the membrane as a helical span at residues 192 to 211 (LVGFFIAMLALMAVLYVHML). Residues 212–240 (ARACQHARGIARLQKRQRPIHQGFGLKGA) are Cytoplasmic-facing. Residues 241–266 (ATLTILLGVFFLCWGPFFLHLSLIVL) form a helical membrane-spanning segment. Over 267 to 279 (CPQHPTCGCIFKN) the chain is Extracellular. Residues 280 to 300 (FNLFLALIICNAIVDPLIYAF) traverse the membrane as a helical segment. Over 301–317 (RSQELRKTLQEVLQCSW) the chain is Cytoplasmic. Cys315 carries S-palmitoyl cysteine lipidation.

It belongs to the G-protein coupled receptor 1 family. As to quaternary structure, interacts with MGRN1, but does not undergo MGRN1-mediated ubiquitination; this interaction competes with GNAS-binding and thus inhibits agonist-induced cAMP production. Interacts with OPN3; the interaction results in a decrease in MC1R-mediated cAMP signaling and ultimately a decrease in melanin production in melanocytes.

The protein localises to the cell membrane. Its function is as follows. Receptor for MSH (alpha, beta and gamma) and ACTH. The activity of this receptor is mediated by G proteins which activate adenylate cyclase. Mediates melanogenesis, the production of eumelanin (black/brown) and phaeomelanin (red/yellow), via regulation of cAMP signaling in melanocytes. The protein is Melanocyte-stimulating hormone receptor (MC1R) of Ovis aries (Sheep).